A 91-amino-acid polypeptide reads, in one-letter code: N(2)-fixation sustaining protein CowN (91 aa).

It belongs to the CowN family.

Its function is as follows. Is required to sustain N(2)-dependent growth in the presence of low levels of carbon monoxide (CO). Probably acts by protecting the N(2) fixation ability of the nitrogenase complex, which is inactivated in the presence of CO. The polypeptide is N(2)-fixation sustaining protein CowN (Beijerinckia indica subsp. indica (strain ATCC 9039 / DSM 1715 / NCIMB 8712)).